The sequence spans 197 residues: Chalcone--flavanone isomerase 2 (197 aa).

The substrate site is built by Thr23, Asn88, and Thr165.

This sequence belongs to the chalcone isomerase family.

It catalyses the reaction a chalcone = a flavanone.. The protein operates within secondary metabolite biosynthesis; flavonoid biosynthesis. Its function is as follows. Catalyzes the intramolecular cyclization of bicyclic chalcones into tricyclic (S)-flavanones. Responsible for the isomerization of 4,2',4',6'-tetrahydroxychalcone (also termed chalcone) into naringenin. The sequence is that of Chalcone--flavanone isomerase 2 (CHI2) from Medicago sativa (Alfalfa).